A 229-amino-acid chain; its full sequence is ATP-dependent Clp protease proteolytic subunit (229 aa).

Ser101 functions as the Nucleophile in the catalytic mechanism. Residue His126 is part of the active site.

It belongs to the peptidase S14 family. In terms of assembly, component of the chloroplastic Clp protease core complex.

The protein localises to the plastid. It localises to the chloroplast stroma. It carries out the reaction Hydrolysis of proteins to small peptides in the presence of ATP and magnesium. alpha-casein is the usual test substrate. In the absence of ATP, only oligopeptides shorter than five residues are hydrolyzed (such as succinyl-Leu-Tyr-|-NHMec, and Leu-Tyr-Leu-|-Tyr-Trp, in which cleavage of the -Tyr-|-Leu- and -Tyr-|-Trp bonds also occurs).. Functionally, cleaves peptides in various proteins in a process that requires ATP hydrolysis. Has a chymotrypsin-like activity. Plays a major role in the degradation of misfolded proteins. The sequence is that of ATP-dependent Clp protease proteolytic subunit from Mesostigma viride (Green alga).